The chain runs to 901 residues: Protein translocase subunit SecA (901 aa).

Residues Gln87, 105 to 109 (GEGKT), and Asp512 each bind ATP. Residues 859–901 (HQDDDSAAAAALAAQTGERKVGRNDPCPCGSGKKYKQCHGRLQ) are disordered. Residues Cys885, Cys887, Cys896, and His897 each contribute to the Zn(2+) site. Positions 891-901 (KKYKQCHGRLQ) are enriched in basic residues.

The protein belongs to the SecA family. As to quaternary structure, monomer and homodimer. Part of the essential Sec protein translocation apparatus which comprises SecA, SecYEG and auxiliary proteins SecDF-YajC and YidC. Zn(2+) serves as cofactor.

It localises to the cell inner membrane. The protein localises to the cytoplasm. It catalyses the reaction ATP + H2O + cellular proteinSide 1 = ADP + phosphate + cellular proteinSide 2.. Functionally, part of the Sec protein translocase complex. Interacts with the SecYEG preprotein conducting channel. Has a central role in coupling the hydrolysis of ATP to the transfer of proteins into and across the cell membrane, serving both as a receptor for the preprotein-SecB complex and as an ATP-driven molecular motor driving the stepwise translocation of polypeptide chains across the membrane. This is Protein translocase subunit SecA from Escherichia coli O127:H6 (strain E2348/69 / EPEC).